Reading from the N-terminus, the 145-residue chain is Early nodulin-like protein 21 (145 aa).

A signal peptide spans 1-17 (MFLWLVIVLTISASVSS). The 99-residue stretch at 18 to 116 (YEHKLNWVVP…GQKMIVEVIS (99 aa)) folds into the Phytocyanin domain. 2 N-linked (GlcNAc...) asparagine glycosylation sites follow: asparagine 30 and asparagine 71. An intrachain disulfide couples cysteine 70 to cysteine 104. Serine 116 carries the GPI-anchor amidated serine lipid modification. Residues 117 to 145 (RDHTTTSAAPPAAFAVLLCFFSLSLYFVA) constitute a propeptide, removed in mature form.

Belongs to the early nodulin-like (ENODL) family. In terms of tissue distribution, mostly expressed in leaves and flowers, and, to a lower extent, in roots and stems, but barely in seedlings and seeds.

It is found in the cell membrane. May act as a carbohydrate transporter. This Arabidopsis thaliana (Mouse-ear cress) protein is Early nodulin-like protein 21.